The sequence spans 643 residues: 1-deoxy-D-xylulose-5-phosphate synthase (643 aa).

Thiamine diphosphate is bound by residues H72 and G113–A115. D144 serves as a coordination point for Mg(2+). Thiamine diphosphate-binding positions include G145–A146, N174, Y287, and E370. Mg(2+) is bound at residue N174.

This sequence belongs to the transketolase family. DXPS subfamily. As to quaternary structure, homodimer. It depends on Mg(2+) as a cofactor. Thiamine diphosphate is required as a cofactor.

It catalyses the reaction D-glyceraldehyde 3-phosphate + pyruvate + H(+) = 1-deoxy-D-xylulose 5-phosphate + CO2. It functions in the pathway metabolic intermediate biosynthesis; 1-deoxy-D-xylulose 5-phosphate biosynthesis; 1-deoxy-D-xylulose 5-phosphate from D-glyceraldehyde 3-phosphate and pyruvate: step 1/1. Catalyzes the acyloin condensation reaction between C atoms 2 and 3 of pyruvate and glyceraldehyde 3-phosphate to yield 1-deoxy-D-xylulose-5-phosphate (DXP). This chain is 1-deoxy-D-xylulose-5-phosphate synthase, found in Synechococcus sp. (strain CC9605).